Consider the following 597-residue polypeptide: Protein IQ-DOMAIN 29 (597 aa).

The disordered stretch occupies residues 1–31 (MGKTPSPGKWIKSLLGKKSSKSSLEKGGEKL). 3 IQ domains span residues 106–134 (LEEA…GITR), 135–153 (VQAV…ATYS), and 157–183 (GIVK…QKTN). A calmodulin-binding region spans residues 159 to 173 (VKVQALVRGKKARSS). The short motif at 264–271 (KKRSFQAV) is the Nuclear localization signal 1 element. Disordered stretches follow at residues 268–379 (FQAV…KKEI) and 407–597 (LIPV…EWKR). The segment covering 289–300 (STTANSSTSRST) has biased composition (low complexity). The segment covering 319-329 (ELSKIENDKSK) has biased composition (basic and acidic residues). Positions 356 to 363 (HKKASLSN) match the Nuclear localization signal 2 motif. Residues 414-463 (KESDLDKDEKSLVLDKPEQDELRTAERDDKAEEELKTAERDDSAEEKIQE) are compositionally biased toward basic and acidic residues. Residues 467–480 (QISSENGNVASENT) show a composition bias toward polar residues. Positions 481–500 (KPSDRRASLPAKIENHHQDD) are enriched in basic and acidic residues. The segment covering 572 to 584 (GSMNSDRSFSSSK) has biased composition (polar residues). The span at 585-597 (DIGDKSTKAEWKR) shows a compositional bias: basic and acidic residues.

The protein belongs to the IQD family. In terms of assembly, binds to multiple calmodulin (CaM) in the presence of Ca(2+) and CaM-like proteins.

It localises to the nucleus. The protein localises to the nucleus envelope. It is found in the cytoplasm. The protein resides in the cytoskeleton. Its subcellular location is the cell membrane. Functionally, may be involved in cooperative interactions with calmodulins or calmodulin-like proteins. Recruits calmodulin proteins to microtubules, thus being a potential scaffold in cellular signaling and trafficking. May associate with nucleic acids and regulate gene expression at the transcriptional or post-transcriptional level. The protein is Protein IQ-DOMAIN 29 of Arabidopsis thaliana (Mouse-ear cress).